The primary structure comprises 128 residues: Cystatin-1 (128 aa).

Positions 1–17 are cleaved as a signal peptide; it reads MIRSAVVLTVLVGVCLA. A Cystatin domain is found at 20-128; sequence GFVGGWSQVD…TKEVTSFECN (109 aa). 2 disulfide bridges follow: Cys-84–Cys-96 and Cys-107–Cys-127.

This sequence belongs to the cystatin family. Mainly expressed in gut.

The protein resides in the secreted. Inhibitor of cysteine proteinases. Strongly inhibits mammalian cathepsin B and H, and moderately inhibits mammalian cathepsin C. Also inhibits endogenous cathepsin B-like but not cathepsin C-like proteinases. May have a protective role against undesired digestion of a stored blood meal by endogenous peptidases. The sequence is that of Cystatin-1 from Ornithodoros moubata (Soft tick).